A 76-amino-acid chain; its full sequence is Exodeoxyribonuclease 7 small subunit (76 aa).

Belongs to the XseB family. Heterooligomer composed of large and small subunits.

It localises to the cytoplasm. It catalyses the reaction Exonucleolytic cleavage in either 5'- to 3'- or 3'- to 5'-direction to yield nucleoside 5'-phosphates.. In terms of biological role, bidirectionally degrades single-stranded DNA into large acid-insoluble oligonucleotides, which are then degraded further into small acid-soluble oligonucleotides. This chain is Exodeoxyribonuclease 7 small subunit, found in Staphylococcus aureus (strain Mu3 / ATCC 700698).